We begin with the raw amino-acid sequence, 868 residues long: Leucine--tRNA ligase (868 aa).

The 'HIGH' region signature appears at 42-52 (PYPSGKLHMGH). The 'KMSKS' region signature appears at 627–631 (KMSKS). Residue K630 coordinates ATP.

The protein belongs to the class-I aminoacyl-tRNA synthetase family.

It localises to the cytoplasm. It catalyses the reaction tRNA(Leu) + L-leucine + ATP = L-leucyl-tRNA(Leu) + AMP + diphosphate. The chain is Leucine--tRNA ligase from Pseudomonas entomophila (strain L48).